The following is a 736-amino-acid chain: uncharacterized protein (736 aa).

2 ABC transporter domains span residues 183-459 and 518-734; these read IKID…KQME and LQMS…TMTI. ATP is bound by residues 215 to 222 and 551 to 558; these read GRNGIGKS and GPNGAGKS.

This sequence belongs to the ABC transporter superfamily.

It is found in the cytoplasm. This is an uncharacterized protein from Schizosaccharomyces pombe (strain 972 / ATCC 24843) (Fission yeast).